A 420-amino-acid polypeptide reads, in one-letter code: MKFTNLTAKEFGAFTDSMPYSHFTQTVGHYELKLAEGYETHLVGIKNNNNEVIAACLLTAVPVMKVFKYFYSNRGPVIDYENQELVHFFFNELSKYVKKHRCLYLHIDPYLPYQYLNHDGEITGNASNDWFFDKMSNLGFEHTGFHKGFDPVLQIRYHSVLDLKDKTADDIIKNMDGLRKRNTKKVKKNGVKVRYLSEEELPIFRSFMEDTSESKAFADRDDKFYYNRLKYYKDRVLVPLAYINFDEYIKELNEERDILNKDLNKALKDIEKRPENKKAHNKRDNLQQQLDANEQKIEEGKRLQEEHGNELPISAGFFFINPFEVVYYAGGTSNAFRHFAGSYAVQWEMINYALNHGIDRYNFYGVSGKFTEDAEDTGVVKFKKGYNAEIIEYVGDFIKPINKPVYAAYTALKKVKDRIF.

Belongs to the FemABX family. Homodimer. Interacts with FemB.

Its subcellular location is the cytoplasm. The catalysed reaction is beta-D-GlcNAc-(1-&gt;4)-Mur2Ac(oyl-L-Ala-D-isoglutaminyl-L-Lys-(N(6)-Gly)-D-Ala-D-Ala)-di-trans,octa-cis-undecaprenyl diphosphate + 2 glycyl-tRNA(Gly) = MurNAc-L-Ala-D-isoglutaminyl-L-Lys-(N(6)-tri-Gly)-D-Ala-D-Ala-diphospho-di-trans,octa-cis-undecaprenyl-GlcNAc + 2 tRNA(Gly) + 2 H(+). Functionally, catalyzes the formation of the pentaglycine interpeptide bridge, which is characteristic of the S.aureus peptidoglycan. Adds glycines 2 and 3 of the pentaglycine bridge, using glycyl-tRNA(Gly) as donor. The chain is Aminoacyltransferase FemA (femA) from Staphylococcus aureus (strain bovine RF122 / ET3-1).